Reading from the N-terminus, the 117-residue chain is Immunoglobulin heavy variable 1-2 (117 aa).

The N-terminal stretch at 1-19 (MDWTWRILFLVAAATGAHS) is a signal peptide. At glutamine 20 the chain carries Pyrrolidone carboxylic acid. The framework-1 stretch occupies residues 20-44 (QVQLVQSGAEVKKPGASVKVSCKAS). The Ig-like domain maps to 20–117 (QVQLVQSGAE…DDTAVYYCAR (98 aa)). Cysteine 41 and cysteine 115 are oxidised to a cystine. The complementarity-determining-1 stretch occupies residues 45–52 (GYTFTGYY). The framework-2 stretch occupies residues 53–69 (MHWVRQAPGQGLEWMGW). A complementarity-determining-2 region spans residues 70 to 77 (INPNSGGT). The segment at 78–115 (NYAQKFQGWVTMTRDTSISTAYMELSRLRSDDTAVYYC) is framework-3. The interval 116–117 (AR) is complementarity-determining-3.

Immunoglobulins are composed of two identical heavy chains and two identical light chains; disulfide-linked.

It localises to the secreted. The protein localises to the cell membrane. Its function is as follows. V region of the variable domain of immunoglobulin heavy chains that participates in the antigen recognition. Immunoglobulins, also known as antibodies, are membrane-bound or secreted glycoproteins produced by B lymphocytes. In the recognition phase of humoral immunity, the membrane-bound immunoglobulins serve as receptors which, upon binding of a specific antigen, trigger the clonal expansion and differentiation of B lymphocytes into immunoglobulins-secreting plasma cells. Secreted immunoglobulins mediate the effector phase of humoral immunity, which results in the elimination of bound antigens. The antigen binding site is formed by the variable domain of one heavy chain, together with that of its associated light chain. Thus, each immunoglobulin has two antigen binding sites with remarkable affinity for a particular antigen. The variable domains are assembled by a process called V-(D)-J rearrangement and can then be subjected to somatic hypermutations which, after exposure to antigen and selection, allow affinity maturation for a particular antigen. In Homo sapiens (Human), this protein is Immunoglobulin heavy variable 1-2.